The primary structure comprises 156 residues: Transcription antitermination protein NusB (156 aa).

This sequence belongs to the NusB family.

Functionally, involved in transcription antitermination. Required for transcription of ribosomal RNA (rRNA) genes. Binds specifically to the boxA antiterminator sequence of the ribosomal RNA (rrn) operons. This Rickettsia felis (strain ATCC VR-1525 / URRWXCal2) (Rickettsia azadi) protein is Transcription antitermination protein NusB.